The sequence spans 374 residues: Probable dual-specificity RNA methyltransferase RlmN 3 (374 aa).

Catalysis depends on Glu-96, which acts as the Proton acceptor. A Radical SAM core domain is found at 110 to 350; sequence DHSRKTICIS…VTLRREKGHD (241 aa). An intrachain disulfide couples Cys-117 to Cys-355. [4Fe-4S] cluster is bound by residues Cys-124, Cys-128, and Cys-131. S-adenosyl-L-methionine-binding positions include 181–182, Ser-213, 236–238, and Asn-312; these read GE and SLH. Cys-355 serves as the catalytic S-methylcysteine intermediate.

It belongs to the radical SAM superfamily. RlmN family. It depends on [4Fe-4S] cluster as a cofactor.

The protein localises to the cytoplasm. It catalyses the reaction adenosine(2503) in 23S rRNA + 2 reduced [2Fe-2S]-[ferredoxin] + 2 S-adenosyl-L-methionine = 2-methyladenosine(2503) in 23S rRNA + 5'-deoxyadenosine + L-methionine + 2 oxidized [2Fe-2S]-[ferredoxin] + S-adenosyl-L-homocysteine. The enzyme catalyses adenosine(37) in tRNA + 2 reduced [2Fe-2S]-[ferredoxin] + 2 S-adenosyl-L-methionine = 2-methyladenosine(37) in tRNA + 5'-deoxyadenosine + L-methionine + 2 oxidized [2Fe-2S]-[ferredoxin] + S-adenosyl-L-homocysteine. Its function is as follows. Specifically methylates position 2 of adenine 2503 in 23S rRNA and position 2 of adenine 37 in tRNAs. The protein is Probable dual-specificity RNA methyltransferase RlmN 3 of Opitutus terrae (strain DSM 11246 / JCM 15787 / PB90-1).